A 612-amino-acid chain; its full sequence is Dihydroxy-acid dehydratase (612 aa).

Mg(2+) is bound at residue aspartate 81. Cysteine 122 is a binding site for [2Fe-2S] cluster. The Mg(2+) site is built by aspartate 123 and lysine 124. Lysine 124 is modified (N6-carboxylysine). Cysteine 195 provides a ligand contact to [2Fe-2S] cluster. Glutamate 491 lines the Mg(2+) pocket. Serine 517 serves as the catalytic Proton acceptor.

This sequence belongs to the IlvD/Edd family. As to quaternary structure, homodimer. Requires [2Fe-2S] cluster as cofactor. Mg(2+) is required as a cofactor.

The enzyme catalyses (2R)-2,3-dihydroxy-3-methylbutanoate = 3-methyl-2-oxobutanoate + H2O. The catalysed reaction is (2R,3R)-2,3-dihydroxy-3-methylpentanoate = (S)-3-methyl-2-oxopentanoate + H2O. The protein operates within amino-acid biosynthesis; L-isoleucine biosynthesis; L-isoleucine from 2-oxobutanoate: step 3/4. It participates in amino-acid biosynthesis; L-valine biosynthesis; L-valine from pyruvate: step 3/4. Functions in the biosynthesis of branched-chain amino acids. Catalyzes the dehydration of (2R,3R)-2,3-dihydroxy-3-methylpentanoate (2,3-dihydroxy-3-methylvalerate) into 2-oxo-3-methylpentanoate (2-oxo-3-methylvalerate) and of (2R)-2,3-dihydroxy-3-methylbutanoate (2,3-dihydroxyisovalerate) into 2-oxo-3-methylbutanoate (2-oxoisovalerate), the penultimate precursor to L-isoleucine and L-valine, respectively. The chain is Dihydroxy-acid dehydratase from Sinorhizobium fredii (strain NBRC 101917 / NGR234).